The following is a 217-amino-acid chain: MFDANCLKLMFVAGSQDFYHIKGDRTNALLDTLELALQSKITAFQFRQKGDLALQDPVEIKRLALECQKLCKKYGTPFIINDEVRLALELKADGVHVGQEDMAIEEVVTLCQKRLFIGLSVNTLEQALKARHLDHIAYLGVGPIFPTPSKKDAKEVVGVNLLKKIHDSGVEKPLIAIGGITTDNASKLQKFSGIAVISAITQAKDKALAVEKLLKNA.

Residues 45-49 (QFRQK) and Asn-81 contribute to the 4-amino-2-methyl-5-(diphosphooxymethyl)pyrimidine site. Positions 82 and 101 each coordinate Mg(2+). Ser-120 is a binding site for 4-amino-2-methyl-5-(diphosphooxymethyl)pyrimidine. 147 to 149 (TPS) contacts 2-[(2R,5Z)-2-carboxy-4-methylthiazol-5(2H)-ylidene]ethyl phosphate. Lys-150 contacts 4-amino-2-methyl-5-(diphosphooxymethyl)pyrimidine. 2-[(2R,5Z)-2-carboxy-4-methylthiazol-5(2H)-ylidene]ethyl phosphate-binding positions include Gly-179 and 197 to 198 (IS).

Belongs to the thiamine-phosphate synthase family. It depends on Mg(2+) as a cofactor.

The enzyme catalyses 2-[(2R,5Z)-2-carboxy-4-methylthiazol-5(2H)-ylidene]ethyl phosphate + 4-amino-2-methyl-5-(diphosphooxymethyl)pyrimidine + 2 H(+) = thiamine phosphate + CO2 + diphosphate. It carries out the reaction 2-(2-carboxy-4-methylthiazol-5-yl)ethyl phosphate + 4-amino-2-methyl-5-(diphosphooxymethyl)pyrimidine + 2 H(+) = thiamine phosphate + CO2 + diphosphate. The catalysed reaction is 4-methyl-5-(2-phosphooxyethyl)-thiazole + 4-amino-2-methyl-5-(diphosphooxymethyl)pyrimidine + H(+) = thiamine phosphate + diphosphate. Its pathway is cofactor biosynthesis; thiamine diphosphate biosynthesis; thiamine phosphate from 4-amino-2-methyl-5-diphosphomethylpyrimidine and 4-methyl-5-(2-phosphoethyl)-thiazole: step 1/1. Condenses 4-methyl-5-(beta-hydroxyethyl)thiazole monophosphate (THZ-P) and 2-methyl-4-amino-5-hydroxymethyl pyrimidine pyrophosphate (HMP-PP) to form thiamine monophosphate (TMP). The sequence is that of Thiamine-phosphate synthase from Helicobacter pylori (strain J99 / ATCC 700824) (Campylobacter pylori J99).